A 440-amino-acid polypeptide reads, in one-letter code: NADH-quinone oxidoreductase subunit D 1 (440 aa).

This sequence belongs to the complex I 49 kDa subunit family. NDH-1 is composed of 14 different subunits. Subunits NuoB, C, D, E, F, and G constitute the peripheral sector of the complex.

It localises to the cell inner membrane. The catalysed reaction is a quinone + NADH + 5 H(+)(in) = a quinol + NAD(+) + 4 H(+)(out). Its function is as follows. NDH-1 shuttles electrons from NADH, via FMN and iron-sulfur (Fe-S) centers, to quinones in the respiratory chain. The immediate electron acceptor for the enzyme in this species is believed to be a menaquinone. Couples the redox reaction to proton translocation (for every two electrons transferred, four hydrogen ions are translocated across the cytoplasmic membrane), and thus conserves the redox energy in a proton gradient. The chain is NADH-quinone oxidoreductase subunit D 1 from Chloroherpeton thalassium (strain ATCC 35110 / GB-78).